Reading from the N-terminus, the 379-residue chain is Cobalt-precorrin-5B C(1)-methyltransferase (379 aa).

The protein belongs to the CbiD family.

The catalysed reaction is Co-precorrin-5B + S-adenosyl-L-methionine = Co-precorrin-6A + S-adenosyl-L-homocysteine. The protein operates within cofactor biosynthesis; adenosylcobalamin biosynthesis; cob(II)yrinate a,c-diamide from sirohydrochlorin (anaerobic route): step 6/10. In terms of biological role, catalyzes the methylation of C-1 in cobalt-precorrin-5B to form cobalt-precorrin-6A. The polypeptide is Cobalt-precorrin-5B C(1)-methyltransferase (Salmonella paratyphi B (strain ATCC BAA-1250 / SPB7)).